Consider the following 174-residue polypeptide: 16S rRNA aminocarboxypropyltransferase (174 aa).

Residues Thr-26, Leu-73, Leu-97, and Ser-116 each coordinate S-adenosyl-L-methionine.

This sequence belongs to the TDD superfamily. TSR3 family.

It is found in the cytoplasm. It catalyses the reaction an N(1)-methylpseudouridine in rRNA + S-adenosyl-L-methionine = N(1)-methyl-N(3)-[(3S)-3-amino-3-carboxypropyl]pseudouridine in rRNA + S-methyl-5'-thioadenosine + H(+). In terms of biological role, aminocarboxypropyltransferase that catalyzes the aminocarboxypropyl transfer on pseudouridine corresponding to position 914 in M.jannaschii 16S rRNA. It constitutes the last step in biosynthesis of the hypermodified N1-methyl-N3-(3-amino-3-carboxypropyl) pseudouridine (m1acp3-Psi). In Methanosarcina acetivorans (strain ATCC 35395 / DSM 2834 / JCM 12185 / C2A), this protein is 16S rRNA aminocarboxypropyltransferase.